We begin with the raw amino-acid sequence, 554 residues long: Glucose-6-phosphate isomerase (554 aa).

The Proton donor role is filled by glutamate 359. Catalysis depends on residues histidine 390 and lysine 518.

Belongs to the GPI family.

It localises to the cytoplasm. It carries out the reaction alpha-D-glucose 6-phosphate = beta-D-fructose 6-phosphate. Its pathway is carbohydrate biosynthesis; gluconeogenesis. It participates in carbohydrate degradation; glycolysis; D-glyceraldehyde 3-phosphate and glycerone phosphate from D-glucose: step 2/4. Functionally, catalyzes the reversible isomerization of glucose-6-phosphate to fructose-6-phosphate. The chain is Glucose-6-phosphate isomerase from Pseudomonas fluorescens (strain Pf0-1).